A 76-amino-acid chain; its full sequence is Exodeoxyribonuclease 7 small subunit (76 aa).

Belongs to the XseB family. In terms of assembly, heterooligomer composed of large and small subunits.

Its subcellular location is the cytoplasm. The enzyme catalyses Exonucleolytic cleavage in either 5'- to 3'- or 3'- to 5'-direction to yield nucleoside 5'-phosphates.. Bidirectionally degrades single-stranded DNA into large acid-insoluble oligonucleotides, which are then degraded further into small acid-soluble oligonucleotides. This is Exodeoxyribonuclease 7 small subunit from Latilactobacillus sakei subsp. sakei (strain 23K) (Lactobacillus sakei subsp. sakei).